The following is an 89-amino-acid chain: Large ribosomal subunit protein bL27 (89 aa).

Residues 1 to 20 (MAHKKAGGSSRNGRDSESKR) are disordered.

This sequence belongs to the bacterial ribosomal protein bL27 family.

The sequence is that of Large ribosomal subunit protein bL27 from Bartonella bacilliformis (strain ATCC 35685 / KC583 / Herrer 020/F12,63).